Reading from the N-terminus, the 377-residue chain is Enoyl reductase cheB (377 aa).

The segment at 18–361 (GGSLVIARDV…REISAEKLVV (344 aa)) is enoyl reductase (ER) domain. NADP(+) is bound at residue 49–52 (CDFK). 137-144 (PCCIATMG) serves as a coordination point for substrate. NADP(+) contacts are provided by residues 173–176 (SSSV), 200–203 (SPKN), Tyr-218, 265–266 (LE), and Thr-283. 285–289 (GAIII) lines the substrate pocket. 354–355 (IS) contacts NADP(+).

Belongs to the zinc-containing alcohol dehydrogenase family. Heme is required as a cofactor.

Its pathway is secondary metabolite biosynthesis. Its function is as follows. Enoyl reductase; part of the gene cluster that mediates the biosynthesis of chaetoglobosin A which has a unique inhibitory activity against actin polymerization in mammalian cells. Chaetoglobosin A and its intermediates are involved in the morphological differentiation of C.globosum. The first step of the pathway is the synthesis of prochaetoglobosin I via condensation of one acetyl-CoA, 8 malonyl-CoA, and a L-tryptophan molecule by the PKS-NRPS hybrid synthetase cheA, followed by reduction of backbone double bond to install desired geometry by the enoyl reductase cheB. Further multiple oxidation steps performed by the cytochrome P450 monooxygenases cheE and cheG, as well as by the FAD-linked oxidoreductase cheF, lead to the formation of chaetoglobosin A. Depending on the order of action of these reductases, distinct intermediates can be identified. Within the pathway, the cytochrome P450 monooxygenase cheE catalyzes a stereospecific epoxidation on prochaetoglobosin I, cytoglobosin D, and chaetoglobosin J intermediates. The FAD-linked oxidoreductase cheF performs dehydrogenation of the C-20 hydroxyl groups in the 20-dihyrochaetoglobosin A and cytoglobosin D intermediates. Finally, the cytochrome P450 monooxygenase cheG can catalyze the stereospecific dihydroxylation of prochaetoglobosin I and prochaetoglobosin IV at C-19 and C-20, respectively. The Diels-Alderase cheD may play a role in the post-PKS-NRPS biosynthetic steps catalyzing Diels-Alder cyclization. This chain is Enoyl reductase cheB, found in Chaetomium globosum (strain ATCC 6205 / CBS 148.51 / DSM 1962 / NBRC 6347 / NRRL 1970) (Soil fungus).